We begin with the raw amino-acid sequence, 203 residues long: Histone deacetylase HDT4 (203 aa).

Residues 2 to 5 are required to repress transcription; it reads EFWG. A disordered region spans residues 121-203; that stretch reads AALPQNEINP…PFPCGPSCKK (83 aa). The span at 129–157 shows a compositional bias: acidic residues; it reads NPEEDDESDSDEMGLDEDDDSSDEEDVEA. The segment covering 180–193 has biased composition (basic residues); the sequence is GGKKNKSSGGKKRC.

Belongs to the histone deacetylase HD2 family. As to expression, confined to stems and flowers with young siliques.

Its subcellular location is the nucleus. The protein localises to the nucleolus. Its function is as follows. Probably mediates the deacetylation of lysine residues lysine residues on the N-terminal part of the core histones (H2A, H2B, H3 and H4). Histone deacetylation gives a tag for epigenetic repression and plays an important role in transcriptional regulation, cell cycle progression and developmental events. The sequence is that of Histone deacetylase HDT4 (HDT4) from Arabidopsis thaliana (Mouse-ear cress).